A 336-amino-acid chain; its full sequence is Ketol-acid reductoisomerase (NADP(+)) (336 aa).

One can recognise a KARI N-terminal Rossmann domain in the interval 1–181; it reads MKVYYDQDAD…GGGRSGIIET (181 aa). NADP(+) contacts are provided by residues 24 to 27, R47, S50, and S52; that span reads YGSQ. H107 is a catalytic residue. Residue G133 participates in NADP(+) binding. The KARI C-terminal knotted domain occupies 182–327; it reads SFREETETDL…ERLRGMMPWI (146 aa). Mg(2+) contacts are provided by D190, E194, E226, and E230. S251 is a binding site for substrate.

The protein belongs to the ketol-acid reductoisomerase family. It depends on Mg(2+) as a cofactor.

The catalysed reaction is (2R)-2,3-dihydroxy-3-methylbutanoate + NADP(+) = (2S)-2-acetolactate + NADPH + H(+). It carries out the reaction (2R,3R)-2,3-dihydroxy-3-methylpentanoate + NADP(+) = (S)-2-ethyl-2-hydroxy-3-oxobutanoate + NADPH + H(+). It functions in the pathway amino-acid biosynthesis; L-isoleucine biosynthesis; L-isoleucine from 2-oxobutanoate: step 2/4. It participates in amino-acid biosynthesis; L-valine biosynthesis; L-valine from pyruvate: step 2/4. Functionally, involved in the biosynthesis of branched-chain amino acids (BCAA). Catalyzes an alkyl-migration followed by a ketol-acid reduction of (S)-2-acetolactate (S2AL) to yield (R)-2,3-dihydroxy-isovalerate. In the isomerase reaction, S2AL is rearranged via a Mg-dependent methyl migration to produce 3-hydroxy-3-methyl-2-ketobutyrate (HMKB). In the reductase reaction, this 2-ketoacid undergoes a metal-dependent reduction by NADPH to yield (R)-2,3-dihydroxy-isovalerate. The chain is Ketol-acid reductoisomerase (NADP(+)) from Halorhodospira halophila (strain DSM 244 / SL1) (Ectothiorhodospira halophila (strain DSM 244 / SL1)).